We begin with the raw amino-acid sequence, 155 residues long: Acetylaranotin biosynthesis cluster protein L (155 aa).

Its pathway is mycotoxin biosynthesis. In terms of biological role, nonribosomal peptide synthetase; part of the gene cluster that mediates the biosynthesis of acetylaranotin, a member of the epipolythiodioxopiperazine (ETP) class of toxins characterized by a disulfide-bridged cyclic dipeptide. The first step of acetylaranotin biosynthesis is performed by the NRPS ataP which produces diketopiperazine cyclo-L-Phe-L-Phe via the condensation of 2 phenylalanines (L-Phe). The ataC domain of ataTC then catalyzes the formation of bishydroxylation of cyclo-L-Phe-L-Phe. The glutathione S-transferase domain ataG in ataIMG further catalyzes the conjugation of two glutathiones to the bishydroxylated intermediate. Next, the dipeptidase ataJ removes the Glu residues. The following step is performed by the carbon sulfur lyase domain ataI of ataIMG which may convert the bis-cysteinyl adduct to yield an epidithiol intermediate. The ataT domain from ataTC then catalyzes the oxidation of the free dithiols, followed by a cyclization step catalyzed by the cytochrome P450 ataF. AtaF probably acts as an epoxidase to promote a dual epoxidation formation at C8 and C9 along with C8' and C9', followed by the spontaneous nucleophilic attack of the amide nitrogens N10 and N10' to yield an intermediate with the pyrrolidine partial structure. The final steps of acetylaranotin biosynthesis involve the acetylation and ring rearrangement of an epitetrathiodiketopiperazine intermediate to produce acetylaranotin. AtaH probably catalyzes the acetylation of epitetrathiodiketopiperazine to produce a diacetate and ataY is responsible for the formation of the dihydrooxepin moiety that converts the diacetate intermediate to acetylaranotin via acetylapoaranotin. Both enzymes could function independently in the absence of the other. The specific function of ataL within the pathway has still to be determined. The acetylaranotin bis-thiomethyltransferase ataS located outside of acetylaranotin gene cluster is the main thiomethyltransferase responsible for converting acetylaranotin and its related intermediates to their methylated forms. This is Acetylaranotin biosynthesis cluster protein L from Aspergillus terreus (strain NIH 2624 / FGSC A1156).